The primary structure comprises 609 residues: Alpha-glucosides permease MPH2 (609 aa).

At 1-106 (MKNLSFLINR…AAAWSLLVST (106 aa)) the chain is on the cytoplasmic side. Residues 107–127 (TLIMEGYDTAILGAFYALPIF) traverse the membrane as a helical segment. The Extracellular segment spans residues 128-142 (QRKFGSQNDKTGEWE). A helical transmembrane segment spans residues 143–163 (ISASWQIGLTLCYMAGEIVGL). The Cytoplasmic portion of the chain corresponds to 164–178 (QLTGPSVDLVGNRYT). Residues 179-199 (LIIALFFLAAFTFILYFCNSL) form a helical membrane-spanning segment. Position 200 (Gly-200) is a topological domain, extracellular. The chain crosses the membrane as a helical span at residues 201–221 (MIAVGQALCGMPWGCFQCLTV). Over 222–234 (SYASEICPLALRY) the chain is Cytoplasmic. Residues 235–255 (YLTTYSNLCWLFGQLFAAGIM) form a helical membrane-spanning segment. At 256–270 (KNSQKKYADSELGYK) the chain is on the extracellular side. The chain crosses the membrane as a helical span at residues 271-291 (LPFALQWILPVPLALGIFFAP). Topologically, residues 292-363 (ESPWWLVKKG…EDKINRRRTR (72 aa)) are cytoplasmic. The chain crosses the membrane as a helical span at residues 364 to 384 (ITCLCWAGQATCGSILIGYST). The Extracellular portion of the chain corresponds to 385 to 397 (YFYEKAGVSTEMS). A helical transmembrane segment spans residues 398 to 418 (FTFSIIQYCLGICATFLSWWA). Over 419-426 (SKYFGRYD) the chain is Cytoplasmic. A helical membrane pass occupies residues 427–447 (LYAFGLAFQTIVFFIIGGLGC). Residues 448–459 (SSTHGSKMGSGS) lie on the Extracellular side of the membrane. A helical membrane pass occupies residues 460-480 (LLMAVAFFYNLGIAPVVFCLV). Residues 481–492 (SEMPSSRLRTKT) are Cytoplasmic-facing. A helical transmembrane segment spans residues 493–513 (IILARNTYNVVSIICSVLILY). Residues 514–525 (QLNSKKWNWGAK) lie on the Extracellular side of the membrane. Residues 526–546 (SGFFWGVLCFCTLIWAVVDLP) traverse the membrane as a helical segment. The Cytoplasmic portion of the chain corresponds to 547–609 (ETAGKTFVEI…QRNSNVSHHL (63 aa)).

This sequence belongs to the major facilitator superfamily. Sugar transporter (TC 2.A.1.1) family.

It is found in the cell membrane. Functionally, high-affinity uptake of maltose and maltotriose. Also transports alpha-methylglucoside, glucose and turanose but not melezitose or trehalose. This is Alpha-glucosides permease MPH2 (MPH2) from Saccharomyces cerevisiae (strain ATCC 204508 / S288c) (Baker's yeast).